The primary structure comprises 241 residues: Beta-casein (241 aa).

The N-terminal stretch at 1–15 (MKILILACLVALALA) is a signal peptide. Residues 21-45 (LNVSSETVESLSSNEPDSSSEESIT) form a disordered region. Residue S24 is modified to Phosphoserine; in form 4-P, form 5-P, form 6-P and form 7-P. A Phosphoserine; in form 7-P modification is found at S25. T27 is subject to Phosphothreonine; in form 6-P and form 7-P. Phosphoserine is present on residues S30 and S32. S33 carries the phosphoserine; in form 5-P, form 6-P and form 7-P modification. Phosphoserine; in form 4-P, form 5-P, form 6-P and form 7-P occurs at positions 38, 39, and 40. N150 is modified (deamidated asparagine).

Belongs to the beta-casein family. In terms of processing, there are at least five different forms found in milk, with varying degrees of phosphorylation. These include form 3-P which is phosphorylated at three sites that have not been determined, this form is present in very low amounts, form 4-P which is phosphorylated at four sites, form 5-P which is phosphorylated at five sites, form 6-P which is phosphorylated at six sites, and form 7-P which is phosphorylated at seven sites. Spontaneous deamidation of Asn-150 produces aspartate or isoaspartate. In terms of tissue distribution, mammary gland specific. Secreted in milk.

The protein localises to the secreted. Its function is as follows. Important role in determination of the surface properties of the casein micelles. In Equus caballus (Horse), this protein is Beta-casein.